The following is a 603-amino-acid chain: MALQMIAPFLSSFLPNPRHSLAAHGLTHQKCVSKHISCSTTTPTYSTTVPRRSGNYKPSIWDYDFVQSLGSGYKVEAHGTRVKKLKEVVKHLLKETDSSLAQIELIDKLRRLGLRWLFKNEIKQVLYTISSDNTSIEMRKDLHAVSTRFRLLRQHGYKVSTDVFNDFKDEKGCFKPSLSMDIKGMLSLYEASHLAFQGETVLDEARAFVSTHLMDIKENIDPILHKKVEHALDMPLHWRLEKLEARWYMDIYMREEGMNSSLLELAMLHFNIVQTTFQTNLKSLSRWWKDLGLGEQLSFTRDRLVECFFWAAAMTPEPQFGRCQEVVAKVAQLIIIIDDIYDVYGTVDELELFTNAIDRWDLEAMEQLPEYMKTCFLALYNSINEIGYDILKEEGRNVIPYLRNTWTELCKAFLVEAKWYSSGYTPTLEEYLQTSWISIGSLPMQTYVFALLGKNLAPESSDFAEKISDILRLGGMMIRLPDDLGTSTDELKRGDVPKSIQCYMHEAGVTEDVARDHIMGLFQETWKKLNEYLVESSLPHAFIDHAMNLGRVSYCTYKHGDGFSDGFGDPGSQEKKMFMSLFAEPLQVDEAKGISFYVDGGSA.

The transit peptide at 1-50 directs the protein to the chloroplast; it reads MALQMIAPFLSSFLPNPRHSLAAHGLTHQKCVSKHISCSTTTPTYSTTVP. (2E)-geranyl diphosphate contacts are provided by R301, D338, D342, R479, and D482. Mg(2+)-binding residues include D338 and D342. Residues 338–342 carry the DDXXD motif motif; that stretch reads DDIYD. Residues D482, T486, and E490 each contribute to the Mg(2+) site.

Belongs to the terpene synthase family. Tpsb subfamily. Homodimer. Mg(2+) serves as cofactor. The cofactor is Mn(2+). As to expression, expressed in the oil cells of the leaves.

It is found in the plastid. The protein resides in the chloroplast. It carries out the reaction (2E)-geranyl diphosphate + H2O = (2E)-geraniol + diphosphate. It participates in secondary metabolite biosynthesis; terpenoid biosynthesis. Monoterpene synthase that catalyzes the formation of geraniol from geranyl diphosphate. This is Geraniol synthase, chloroplastic (GerS) from Cinnamomum tenuipile (Alseodaphne mollis).